Consider the following 545-residue polypeptide: Reticulon-2 (545 aa).

Disordered stretches follow at residues 1-183 (MGQV…ETGE) and 199-250 (SPEV…EREP). Low complexity predominate over residues 14–25 (APSTASSTPDST). Residues 32 to 43 (SDFRELHTAREF) show a composition bias toward basic and acidic residues. At Ser-44 the chain carries Phosphoserine. A compositionally biased stretch (basic and acidic residues) spans 135–146 (RPLEDLRLRLDH). A compositionally biased stretch (low complexity) spans 157-166 (GEDSSTSSST). The segment covering 199–230 (SPEVLTPQLSPGSGTPQAGTPSPSRSRDSNSG) has biased composition (polar residues). Ser-227 and Ser-229 each carry phosphoserine. The 201-residue stretch at 345-545 (VADLLYWKDT…AVSGSKAKAE (201 aa)) folds into the Reticulon domain. 2 helical membrane passes run 368–388 (LLCL…LLLL) and 463–483 (LLFY…LLIL).

In terms of assembly, interacts with isoform 1 but not isoform 3 of SPAST. Interacts with BACE1. Interacts (via first transmembrane domain) with ARL6IP5/GTRAP3-18. Interacts (via N-terminus) with SLC1A1/EAAC1; the interaction promotes cell surface expression of SLC1A1. Interacts with TMEM33. In terms of tissue distribution, highly expressed in skeletal muscle.

The protein localises to the endoplasmic reticulum membrane. It is found in the sarcoplasmic reticulum membrane. Its subcellular location is the cell membrane. The protein resides in the sarcolemma. It localises to the T-tubule. The protein localises to the cytoplasm. It is found in the myofibril. Its subcellular location is the sarcomere. The protein resides in the z line. It localises to the cytoskeleton. In terms of biological role, inhibits amyloid precursor protein processing, probably by blocking BACE1 activity. Enhances trafficking of the glutamate transporter SLC1A1/EAAC1 from the endoplasmic reticulum to the cell surface. Plays a role in the translocation of SLC2A4/GLUT4 from intracellular membranes to the cell membrane which facilitates the uptake of glucose into the cell. This is Reticulon-2 (RTN2) from Homo sapiens (Human).